Reading from the N-terminus, the 227-residue chain is 2,3-bisphosphoglycerate-dependent phosphoglycerate mutase (227 aa).

Residues 7–14 (RHGLSEWN), 20–21 (TG), Arg59, 86–89 (ERHY), Lys97, 113–114 (RR), and 182–183 (GN) each bind substrate. The active-site Tele-phosphohistidine intermediate is His8. Glu86 acts as the Proton donor/acceptor in catalysis.

Belongs to the phosphoglycerate mutase family. BPG-dependent PGAM subfamily. As to quaternary structure, homodimer.

The catalysed reaction is (2R)-2-phosphoglycerate = (2R)-3-phosphoglycerate. The protein operates within carbohydrate degradation; glycolysis; pyruvate from D-glyceraldehyde 3-phosphate: step 3/5. In terms of biological role, catalyzes the interconversion of 2-phosphoglycerate and 3-phosphoglycerate. The sequence is that of 2,3-bisphosphoglycerate-dependent phosphoglycerate mutase from Mannheimia succiniciproducens (strain KCTC 0769BP / MBEL55E).